A 262-amino-acid polypeptide reads, in one-letter code: Thiazole synthase (262 aa).

The Schiff-base intermediate with DXP role is filled by Lys-96. Residues Gly-157, Ala-184–Gly-185, and Asn-206–Thr-207 contribute to the 1-deoxy-D-xylulose 5-phosphate site.

It belongs to the ThiG family. In terms of assembly, homotetramer. Forms heterodimers with either ThiH or ThiS.

Its subcellular location is the cytoplasm. The catalysed reaction is [ThiS sulfur-carrier protein]-C-terminal-Gly-aminoethanethioate + 2-iminoacetate + 1-deoxy-D-xylulose 5-phosphate = [ThiS sulfur-carrier protein]-C-terminal Gly-Gly + 2-[(2R,5Z)-2-carboxy-4-methylthiazol-5(2H)-ylidene]ethyl phosphate + 2 H2O + H(+). It participates in cofactor biosynthesis; thiamine diphosphate biosynthesis. Catalyzes the rearrangement of 1-deoxy-D-xylulose 5-phosphate (DXP) to produce the thiazole phosphate moiety of thiamine. Sulfur is provided by the thiocarboxylate moiety of the carrier protein ThiS. In vitro, sulfur can be provided by H(2)S. The sequence is that of Thiazole synthase from Legionella pneumophila (strain Lens).